The following is a 100-amino-acid chain: Vesicle-associated membrane protein 8 (100 aa).

Residues 1–74 lie on the Cytoplasmic side of the membrane; sequence MEASGSAGND…ARKFWWKNVK (74 aa). 2 positions are modified to phosphoserine: S4 and S17. The 61-residue stretch at 11-71 folds into the v-SNARE coiled-coil homology domain; the sequence is RVRNLQSEVE…QKVARKFWWK (61 aa). Residues T27, T47, and T53 each carry the phosphothreonine modification. The residue at position 54 (S54) is a Phosphoserine. A helical; Anchor for type IV membrane protein membrane pass occupies residues 75–95; sequence MIVIICVIVLIILILIILFAT. At 96–100 the chain is on the vesicular side; sequence GTIPT.

Belongs to the synaptobrevin family. As to quaternary structure, forms a SNARE complex composed of VAMP8, SNAP29 and STX17 involved in fusion of autophagosome with lysosome. Found in a number of SNARE complexes with NAPA, SNAP23, SNAP25, STX1A, STX4, STX7, STX8 and VTI1B. Interacts with PICALM. SNARE complex formation and binding by PICALM are mutually exclusive processes for VAMP8. Interacts with SBF2/MTMR13. Interacts with RAB21 (in GTP-bound form) in response to starvation; the interaction probably regulates VAMP8 endolysosomal trafficking. Interacts with STX17; this interaction is increased in the absence of TMEM39A. Interacts with TRIM6. In terms of tissue distribution, expressed (at protein level) at a high level in kidney, lung and spleen; at a lower level in testis, liver, brain and heart. Expressed in kidney and retinal pigment epithelium derived cell line.

Its subcellular location is the lysosome membrane. It localises to the late endosome membrane. The protein resides in the early endosome membrane. It is found in the midbody. The protein localises to the cell membrane. Its subcellular location is the zymogen granule membrane. In terms of biological role, SNAREs, soluble N-ethylmaleimide-sensitive factor-attachment protein receptors, are essential proteins for fusion of cellular membranes. SNAREs localized on opposing membranes assemble to form a trans-SNARE complex, an extended, parallel four alpha-helical bundle that drives membrane fusion. VAMP8 is a SNARE involved in autophagy through the direct control of autophagosome membrane fusion with the lysososome membrane via its interaction with the STX17-SNAP29 binary t-SNARE complex. Also required for dense-granule secretion in platelets. Also plays a role in regulated enzyme secretion in pancreatic acinar cells. Involved in the abscission of the midbody during cell division, which leads to completely separate daughter cells. Involved in the homotypic fusion of early and late endosomes. Also participates in the activation of type I interferon antiviral response through a TRIM6-dependent mechanism. The polypeptide is Vesicle-associated membrane protein 8 (Rattus norvegicus (Rat)).